A 1287-amino-acid chain; its full sequence is DNA-directed RNA polymerase subunit beta (1287 aa).

It belongs to the RNA polymerase beta chain family. As to quaternary structure, the RNAP catalytic core consists of 2 alpha, 1 beta, 1 beta' and 1 omega subunit. When a sigma factor is associated with the core the holoenzyme is formed, which can initiate transcription.

It carries out the reaction RNA(n) + a ribonucleoside 5'-triphosphate = RNA(n+1) + diphosphate. DNA-dependent RNA polymerase catalyzes the transcription of DNA into RNA using the four ribonucleoside triphosphates as substrates. In Mycoplasma capricolum subsp. capricolum (strain California kid / ATCC 27343 / NCTC 10154), this protein is DNA-directed RNA polymerase subunit beta.